The chain runs to 351 residues: UPF0252 protein MJECL39 (351 aa).

Helical transmembrane passes span 58-78 and 91-111; these read FITFFIIVGLVWAIFPEVWLW and IIICCLYFIITIILFLFLCGV.

It belongs to the UPF0252 family.

It localises to the cell membrane. This is UPF0252 protein MJECL39 from Methanocaldococcus jannaschii (strain ATCC 43067 / DSM 2661 / JAL-1 / JCM 10045 / NBRC 100440) (Methanococcus jannaschii).